A 107-amino-acid polypeptide reads, in one-letter code: ATP-dependent Clp protease adapter protein ClpS (107 aa).

It belongs to the ClpS family. In terms of assembly, binds to the N-terminal domain of the chaperone ClpA.

Functionally, involved in the modulation of the specificity of the ClpAP-mediated ATP-dependent protein degradation. This chain is ATP-dependent Clp protease adapter protein ClpS, found in Syntrophus aciditrophicus (strain SB).